Consider the following 315-residue polypeptide: Malate dehydrogenase (315 aa).

NAD(+) is bound by residues Gly-10–Gly-15 and Asp-34. Residues Arg-85 and Arg-91 each contribute to the substrate site. Residues Asn-98 and Val-121–Asn-123 each bind NAD(+). Asn-123 and Arg-154 together coordinate substrate. His-178 functions as the Proton acceptor in the catalytic mechanism.

Belongs to the LDH/MDH superfamily. MDH type 3 family.

It catalyses the reaction (S)-malate + NAD(+) = oxaloacetate + NADH + H(+). Catalyzes the reversible oxidation of malate to oxaloacetate. The polypeptide is Malate dehydrogenase (Rhodopirellula baltica (strain DSM 10527 / NCIMB 13988 / SH1)).